A 496-amino-acid chain; its full sequence is Myotilin (496 aa).

Residues 1 to 37 (MFNYERPKHFIQPQNPCGSRLQPPGPEVSGFPSQTKQ) are disordered. Position 20 is an omega-N-methylarginine (Arg-20). The interval 78 to 149 (PNPGQKVTAT…PTPKTPDHEI (72 aa)) is necessary for interaction with ACTN1. Composition is skewed to polar residues over residues 202–213 (NSDVQDSPQHNP) and 221–233 (PTSQVRSRSSSRA). Positions 202 to 239 (NSDVQDSPQHNPEQARLHVPTSQVRSRSSSRAEANDQD) are disordered. The necessary for interaction with FLNC stretch occupies residues 213-491 (PEQARLHVPT…QRLAAQSGLY (279 aa)). A necessary for interaction with ACTA1 region spans residues 213–496 (PEQARLHVPT…QSGLYESEEL (284 aa)). Ig-like C2-type domains are found at residues 248-333 (PRFI…ATFT) and 347-439 (PMFI…LDVT).

This sequence belongs to the myotilin/palladin family. Homodimer. Interacts with ACTA1, ACTN1, FLNA, FLNB, FLNC, and MYOZ2. Interacts with the C-terminal region of MYOZ1. Expressed in skeletal muscle (at protein level).

Its subcellular location is the cell membrane. It is found in the sarcolemma. The protein resides in the cytoplasm. It localises to the cytoskeleton. The protein localises to the myofibril. Its subcellular location is the sarcomere. It is found in the z line. In terms of biological role, component of a complex of multiple actin cross-linking proteins. Involved in the control of myofibril assembly and stability at the Z lines in muscle cells. The chain is Myotilin (Myot) from Mus musculus (Mouse).